Reading from the N-terminus, the 205-residue chain is Large ribosomal subunit protein uL4 (205 aa).

A disordered region spans residues 45 to 97 (RQGTSAVKNRSAVRGGGKKPWRQKGTGRARQGSIRAPQWRGGGTVFGPTPRSY). Over residues 60–71 (GGKKPWRQKGTG) the composition is skewed to basic residues.

This sequence belongs to the universal ribosomal protein uL4 family. As to quaternary structure, part of the 50S ribosomal subunit.

Functionally, one of the primary rRNA binding proteins, this protein initially binds near the 5'-end of the 23S rRNA. It is important during the early stages of 50S assembly. It makes multiple contacts with different domains of the 23S rRNA in the assembled 50S subunit and ribosome. Forms part of the polypeptide exit tunnel. This is Large ribosomal subunit protein uL4 from Lactobacillus gasseri (strain ATCC 33323 / DSM 20243 / BCRC 14619 / CIP 102991 / JCM 1131 / KCTC 3163 / NCIMB 11718 / NCTC 13722 / AM63).